We begin with the raw amino-acid sequence, 277 residues long: Hemin import ATP-binding protein HmuV (277 aa).

Residues valine 19–arginine 259 form the ABC transporter domain. Glycine 51 to serine 58 lines the ATP pocket.

The protein belongs to the ABC transporter superfamily. Heme (hemin) importer (TC 3.A.1.14.5) family. The complex is composed of two ATP-binding proteins (HmuV), two transmembrane proteins (HmuU) and a solute-binding protein (HmuT).

The protein resides in the cell membrane. Part of the ABC transporter complex HmuTUV involved in hemin import. Responsible for energy coupling to the transport system. The protein is Hemin import ATP-binding protein HmuV of Deinococcus geothermalis (strain DSM 11300 / CIP 105573 / AG-3a).